The chain runs to 110 residues: UPF0251 protein PH0803 (110 aa).

Belongs to the UPF0251 family.

The polypeptide is UPF0251 protein PH0803 (Pyrococcus horikoshii (strain ATCC 700860 / DSM 12428 / JCM 9974 / NBRC 100139 / OT-3)).